The primary structure comprises 124 residues: UPF0231 protein Sama_0645 (124 aa).

Belongs to the UPF0231 family.

This Shewanella amazonensis (strain ATCC BAA-1098 / SB2B) protein is UPF0231 protein Sama_0645.